The following is a 543-amino-acid chain: CTP synthase (543 aa).

The interval Met1–Leu265 is amidoligase domain. A CTP-binding site is contributed by Ser13. Ser13 contacts UTP. ATP is bound by residues Ser14 to Ile19 and Asp71. Mg(2+) contacts are provided by Asp71 and Glu139. Residues Asp146 to Glu148, Lys186 to Gln191, and Lys222 contribute to the CTP site. UTP contacts are provided by residues Lys186–Gln191 and Lys222. In terms of domain architecture, Glutamine amidotransferase type-1 spans Thr290 to Lys541. Gly351 is an L-glutamine binding site. Cys378 (nucleophile; for glutamine hydrolysis) is an active-site residue. Residues Leu379–Gln382, Glu402, and Arg469 each bind L-glutamine. Residues His514 and Glu516 contribute to the active site.

This sequence belongs to the CTP synthase family. Homotetramer.

The catalysed reaction is UTP + L-glutamine + ATP + H2O = CTP + L-glutamate + ADP + phosphate + 2 H(+). The enzyme catalyses L-glutamine + H2O = L-glutamate + NH4(+). It catalyses the reaction UTP + NH4(+) + ATP = CTP + ADP + phosphate + 2 H(+). Its pathway is pyrimidine metabolism; CTP biosynthesis via de novo pathway; CTP from UDP: step 2/2. Allosterically activated by GTP, when glutamine is the substrate; GTP has no effect on the reaction when ammonia is the substrate. The allosteric effector GTP functions by stabilizing the protein conformation that binds the tetrahedral intermediate(s) formed during glutamine hydrolysis. Inhibited by the product CTP, via allosteric rather than competitive inhibition. Catalyzes the ATP-dependent amination of UTP to CTP with either L-glutamine or ammonia as the source of nitrogen. Regulates intracellular CTP levels through interactions with the four ribonucleotide triphosphates. This chain is CTP synthase, found in Pseudomonas fluorescens (strain Pf0-1).